The sequence spans 889 residues: Alanine--tRNA ligase (889 aa).

Zn(2+) is bound by residues histidine 587, histidine 591, cysteine 691, and histidine 695. 2 disordered regions span residues 734 to 760 (QQEQESKRKAEEAVAKEQLEKQREENK) and 866 to 889 (AQGGGKDTSKKDEAISKAKSMILG). Positions 872 to 881 (DTSKKDEAIS) are enriched in basic and acidic residues.

Belongs to the class-II aminoacyl-tRNA synthetase family. Requires Zn(2+) as cofactor.

The protein localises to the cytoplasm. It catalyses the reaction tRNA(Ala) + L-alanine + ATP = L-alanyl-tRNA(Ala) + AMP + diphosphate. Its function is as follows. Catalyzes the attachment of alanine to tRNA(Ala) in a two-step reaction: alanine is first activated by ATP to form Ala-AMP and then transferred to the acceptor end of tRNA(Ala). Also edits incorrectly charged Ser-tRNA(Ala) and Gly-tRNA(Ala) via its editing domain. The sequence is that of Alanine--tRNA ligase from Nitrosopumilus maritimus (strain SCM1).